Here is a 290-residue protein sequence, read N- to C-terminus: Probable 2-(5''-triphosphoribosyl)-3'-dephosphocoenzyme-A synthase (290 aa).

It belongs to the CitG/MdcB family.

The catalysed reaction is 3'-dephospho-CoA + ATP = 2'-(5''-triphospho-alpha-D-ribosyl)-3'-dephospho-CoA + adenine. Its function is as follows. Involved in the formation of 2-(5''-phosphoribosyl)-3'-dephosphocoenzyme-A, the prosthetic group of the acyl-carrier protein of the malonate decarboxylase. This Pseudomonas fluorescens (strain Pf0-1) protein is Probable 2-(5''-triphosphoribosyl)-3'-dephosphocoenzyme-A synthase.